The following is a 276-amino-acid chain: Natural cytotoxicity triggering receptor 2 (276 aa).

Residues 1 to 21 (MAWRALHPLLLLLLLFPGSQA) form the signal peptide. Residues 22–120 (QSKAQVLQSV…IYRPSDNSVS (99 aa)) enclose the Ig-like domain. Residues 22–192 (QSKAQVLQSV…LRPGPAAPIA (171 aa)) lie on the Extracellular side of the membrane. 2 disulfide bridges follow: C40–C109 and C55–C63. 2 stretches are compositionally biased toward polar residues: residues 138–156 (TSWT…QSCV) and 167–183 (ESPS…NSTL). Residues 138 to 184 (TSWTPRDLVSSQTQTQSCVPPTAGARQAPESPSTIPVPSQPQNSTLR) form a disordered region. N-linked (GlcNAc...) asparagine glycosylation is present at N180. Residues 193–213 (LVPVFCGLLVAKSLVLSALLV) traverse the membrane as a helical segment. Topologically, residues 214–276 (WWGDIWWKTM…ISDDDDEHTL (63 aa)) are cytoplasmic.

It belongs to the natural cytotoxicity receptor (NCR) family. As to quaternary structure, interacts with TYROBP/DAP12. Interacts with KMT2E isoform NKp44L. Selectively expressed by activated NK cells and by in vitro cultured (i.e. activated) TCRg/d lymphoid cells.

It localises to the cell membrane. In terms of biological role, cytotoxicity-activating receptor that may contribute to the increased efficiency of activated natural killer (NK) cells to mediate tumor cell lysis. In Homo sapiens (Human), this protein is Natural cytotoxicity triggering receptor 2 (NCR2).